We begin with the raw amino-acid sequence, 478 residues long: Chromosomal replication initiator protein DnaA (478 aa).

The tract at residues 1–90 (MSVELWQQCV…KRSSAPRAVQ (90 aa)) is domain I, interacts with DnaA modulators. Positions 91-141 (PASPPPAVVQAAPVAIEEASAARTVDAQPVAPATVRTERSVQVEGGLKHTS) are domain II. The segment at 142 to 358 (YLNRAFTFEN…GALKRVIAHS (217 aa)) is domain III, AAA+ region. Residues glycine 186, glycine 188, lysine 189, and threonine 190 each coordinate ATP. Residues 359–478 (HFTNHPITIE…YKNLLRTLTT (120 aa)) form a domain IV, binds dsDNA region.

Belongs to the DnaA family. As to quaternary structure, oligomerizes as a right-handed, spiral filament on DNA at oriC.

The protein resides in the cytoplasm. Functionally, plays an essential role in the initiation and regulation of chromosomal replication. ATP-DnaA binds to the origin of replication (oriC) to initiate formation of the DNA replication initiation complex once per cell cycle. Binds the DnaA box (a 9 base pair repeat at the origin) and separates the double-stranded (ds)DNA. Forms a right-handed helical filament on oriC DNA; dsDNA binds to the exterior of the filament while single-stranded (ss)DNA is stabiized in the filament's interior. The ATP-DnaA-oriC complex binds and stabilizes one strand of the AT-rich DNA unwinding element (DUE), permitting loading of DNA polymerase. After initiation quickly degrades to an ADP-DnaA complex that is not apt for DNA replication. Binds acidic phospholipids. The chain is Chromosomal replication initiator protein DnaA from Azotobacter vinelandii (strain DJ / ATCC BAA-1303).